We begin with the raw amino-acid sequence, 247 residues long: Probable membrane transporter protein y4hK (247 aa).

The next 6 membrane-spanning stretches (helical) occupy residues 5–25 (AIGL…VGQA), 31–51 (IAAM…ALAL), 74–94 (VYPF…VHLP), 121–141 (SALV…ITGA), 202–222 (FLPW…LIGS), and 227–247 (ASWL…KLLW).

It belongs to the 4-toluene sulfonate uptake permease (TSUP) (TC 2.A.102) family.

Its subcellular location is the cell membrane. The sequence is that of Probable membrane transporter protein y4hK from Sinorhizobium fredii (strain NBRC 101917 / NGR234).